The sequence spans 221 residues: ATP phosphoribosyltransferase (221 aa).

The protein belongs to the ATP phosphoribosyltransferase family. Short subfamily. As to quaternary structure, heteromultimer composed of HisG and HisZ subunits.

It is found in the cytoplasm. The catalysed reaction is 1-(5-phospho-beta-D-ribosyl)-ATP + diphosphate = 5-phospho-alpha-D-ribose 1-diphosphate + ATP. It participates in amino-acid biosynthesis; L-histidine biosynthesis; L-histidine from 5-phospho-alpha-D-ribose 1-diphosphate: step 1/9. Functionally, catalyzes the condensation of ATP and 5-phosphoribose 1-diphosphate to form N'-(5'-phosphoribosyl)-ATP (PR-ATP). Has a crucial role in the pathway because the rate of histidine biosynthesis seems to be controlled primarily by regulation of HisG enzymatic activity. The chain is ATP phosphoribosyltransferase from Anaeromyxobacter sp. (strain K).